Here is a 159-residue protein sequence, read N- to C-terminus: Betainyl-CoA thioesterase (159 aa).

It belongs to the betainyl-CoA thioesterase family.

It carries out the reaction N,N,N-trimethylglycyl-CoA + H2O = glycine betaine + CoA + H(+). Its pathway is amine and polyamine metabolism; carnitine metabolism. Catalyzes the cleavage of betainyl-CoA (N,N,N-trimethylglycyl-CoA) into glycine betaine and coenzyme A. Is involved in a L-carnitine degradation pathway that allows P.aeruginosa to grow on L-carnitine as the sole source of carbon and nitrogen. This Pseudomonas aeruginosa (strain ATCC 15692 / DSM 22644 / CIP 104116 / JCM 14847 / LMG 12228 / 1C / PRS 101 / PAO1) protein is Betainyl-CoA thioesterase.